The sequence spans 298 residues: Phospholipase A1 (298 aa).

Cys4 and Cys87 are disulfide-bonded. Asn88 and Asn122 each carry an N-linked (GlcNAc...) asparagine glycan. Ser134 serves as the catalytic Nucleophile. The Charge relay system role is filled by Asp162. Intrachain disulfides connect Cys173–Cys178 and Cys216–Cys225. Catalysis depends on His227, which acts as the Charge relay system. 3 disulfides stabilise this stretch: Cys242-Cys266, Cys243-Cys291, and Cys259-Cys264.

The protein belongs to the AB hydrolase superfamily. Lipase family. In terms of tissue distribution, expressed by the venom gland.

The protein resides in the secreted. The enzyme catalyses a 1,2-diacyl-sn-glycero-3-phosphocholine + H2O = a 2-acyl-sn-glycero-3-phosphocholine + a fatty acid + H(+). Catalyzes the hydrolysis of phosphatidylcholine with phospholipase A1 activity. May act as an allergen and induce hemolytic activity. The protein is Phospholipase A1 of Vespula squamosa (Southern yellow jacket).